The primary structure comprises 292 residues: MPDKRTALDDAVAQLRSGMTIGIAGWGSRRKPMAFVRAILRSDVTDLTVVTYGGPDLGLLCSAGKVKRVYYGFVSLDSPPFYDPWFAHARTSGAIEAREMDEGMLRCGLQAAAQRLPFLPIRAGLGSSVPQFWAGELQTVTSPYPAPGGGYETLIAMPALRLDAAFAHLNLGDSHGNAAYTGIDPYFDDLFLMAAERRFLSVERIVATEELVKSVPPQALLVNRMMVDAIVEAPGGAHFTTAAPDYGRDEQFQRHYAEAASTQVGWQQFVHTYLSGTEADYQAAVHNFGASR.

The protein belongs to the 3-oxoacid CoA-transferase subunit A family. Heterotetramer composed of 2 IpdA subunits and 2 IpdB subunits.

The catalysed reaction is (3E)-2-(2-carboxylatoethyl)-3-methyl-6-oxocyclohex-1-ene-1-carboxyl-CoA + H2O = 6-methyl-3,7-dioxodecanedioyl-CoA. It participates in steroid metabolism; cholesterol degradation. Functionally, involved in the final steps of cholesterol and steroid degradation. Opens the last steroid ring of cholesterol by catalyzing the hydrolysis of (3E)-2-(2-carboxylatoethyl)-3-methyl-6-oxocyclohex-1-ene-1-carboxyl-CoA (COCHEA-CoA) to 6-methyl-3,7-dioxodecanedioyl-CoA (MeDODA-CoA). The sequence is that of Cholesterol ring-cleaving hydrolase IpdA subunit from Mycobacterium tuberculosis (strain CDC 1551 / Oshkosh).